The following is a 272-amino-acid chain: 3',5'-cyclic adenosine monophosphate phosphodiesterase CpdA (272 aa).

Fe cation is bound by residues Asp21, His23, Asp63, Asn93, His161, His200, and His202. AMP is bound by residues His23, Asp63, and 93 to 94; that span reads NH. Residue His202 coordinates AMP.

This sequence belongs to the cyclic nucleotide phosphodiesterase class-III family. In terms of assembly, monomer. A divalent metal cation is required as a cofactor.

It catalyses the reaction 3',5'-cyclic AMP + H2O = AMP + H(+). With respect to regulation, activated by iron. Other divalent metal ions have no effect. Hydrolyzes cAMP to 5'-AMP. Plays an important regulatory role in modulating the intracellular concentration of cAMP, thereby influencing cAMP-dependent processes. Specifically required for regulation of virulence factors. Can also hydrolyze cGMP, but cGMP is unlikely to be synthesized by P.aeruginosa and cAMP is probably the biologically relevant substrate for CpdA in vivo. The polypeptide is 3',5'-cyclic adenosine monophosphate phosphodiesterase CpdA (Pseudomonas aeruginosa).